The following is a 205-amino-acid chain: Lipoprotein MlpB (205 aa).

Positions 1–17 (MKIINILFCLLLIVLNS) are cleaved as a signal peptide. Cysteine 18 carries N-palmitoyl cysteine lipidation. Cysteine 18 carries S-diacylglycerol cysteine lipidation.

This sequence belongs to the Multicopy lipoprotein (Mlp) family.

It is found in the cell outer membrane. Functionally, an outer membrane protein that may participate in pathogenesis. Some human Lyme disease patients have antibodies against this protein. The Mlp proteins probably undergo intragenic recombination, generating new alleles. The protein is Lipoprotein MlpB of Borreliella burgdorferi (strain ATCC 35210 / DSM 4680 / CIP 102532 / B31) (Borrelia burgdorferi).